The chain runs to 311 residues: Cell division control protein 2 homolog 3 (311 aa).

The 284-residue stretch at 23-306 (YNRMDILGEG…AKAALQHPWF (284 aa)) folds into the Protein kinase domain. ATP is bound by residues 29–37 (LGEGTYGVV) and lysine 52. Threonine 33 carries the phosphothreonine modification. Position 34 is a phosphotyrosine (tyrosine 34). Residue aspartate 145 is the Proton acceptor of the active site.

Belongs to the protein kinase superfamily. CMGC Ser/Thr protein kinase family. CDC2/CDKX subfamily. In terms of assembly, forms a stable but non-covalent complex with a regulatory subunit and with a cyclin.

The catalysed reaction is L-seryl-[protein] + ATP = O-phospho-L-seryl-[protein] + ADP + H(+). The enzyme catalyses L-threonyl-[protein] + ATP = O-phospho-L-threonyl-[protein] + ADP + H(+). Its activity is regulated as follows. Phosphorylation at Thr-33 or Tyr-34 inactivates the enzyme. Its function is as follows. Probably involved in the control of the cell cycle. This Trypanosoma brucei brucei protein is Cell division control protein 2 homolog 3 (CRK3).